We begin with the raw amino-acid sequence, 355 residues long: S-adenosylmethionine:tRNA ribosyltransferase-isomerase (355 aa).

It belongs to the QueA family. Monomer.

It localises to the cytoplasm. It catalyses the reaction 7-aminomethyl-7-carbaguanosine(34) in tRNA + S-adenosyl-L-methionine = epoxyqueuosine(34) in tRNA + adenine + L-methionine + 2 H(+). It participates in tRNA modification; tRNA-queuosine biosynthesis. Functionally, transfers and isomerizes the ribose moiety from AdoMet to the 7-aminomethyl group of 7-deazaguanine (preQ1-tRNA) to give epoxyqueuosine (oQ-tRNA). The sequence is that of S-adenosylmethionine:tRNA ribosyltransferase-isomerase from Photorhabdus laumondii subsp. laumondii (strain DSM 15139 / CIP 105565 / TT01) (Photorhabdus luminescens subsp. laumondii).